The sequence spans 340 residues: Uroporphyrinogen decarboxylase (340 aa).

Substrate is bound by residues Arg21–Arg25, Asp71, Tyr148, Ser203, and His316.

The protein belongs to the uroporphyrinogen decarboxylase family. In terms of assembly, homodimer.

The protein localises to the cytoplasm. The enzyme catalyses uroporphyrinogen III + 4 H(+) = coproporphyrinogen III + 4 CO2. Its pathway is porphyrin-containing compound metabolism; protoporphyrin-IX biosynthesis; coproporphyrinogen-III from 5-aminolevulinate: step 4/4. Catalyzes the decarboxylation of four acetate groups of uroporphyrinogen-III to yield coproporphyrinogen-III. The sequence is that of Uroporphyrinogen decarboxylase from Campylobacter jejuni subsp. jejuni serotype O:23/36 (strain 81-176).